The primary structure comprises 177 residues: Dihydrofolate reductase type 9 (177 aa).

One can recognise a DHFR domain in the interval Ser-3–Asn-167.

This sequence belongs to the dihydrofolate reductase family. Homodimer.

It catalyses the reaction (6S)-5,6,7,8-tetrahydrofolate + NADP(+) = 7,8-dihydrofolate + NADPH + H(+). It functions in the pathway cofactor biosynthesis; tetrahydrofolate biosynthesis; 5,6,7,8-tetrahydrofolate from 7,8-dihydrofolate: step 1/1. Key enzyme in folate metabolism. Catalyzes an essential reaction for de novo glycine and purine synthesis, and for DNA precursor synthesis. This is Dihydrofolate reductase type 9 (dhfrIX) from Escherichia coli.